A 333-amino-acid chain; its full sequence is MTKVESTSGEVSEWADLNKDILELIFNKLDVMDITMGASRVCISWFLASHNKTLWNTVDLTNLQELDVSRIFNFKDKERPIFFYKHPVDHKHGLTNLLTKIISRFFLDFFEVEGSISLMNLLVEISKLSRMAPKNLFFNFNSYIQENGLKFAAEKMPNIEKLALPIWCYQNEKSLRFAFSQWKNLKTLIIAHEHSFSGRFDFKAVGESCSNLTNLKYLGRLEEYTSREIVSYLHSLKRLSLRCFLVSSIAVYRFITGLPNLTILNVSHCKNPYDYFLPIAKSIDNYVITAATQKLEKFITCPHDCMICKDRCRYSLSYLAEVWRNDEIKELEF.

Residues 11 to 58 enclose the F-box domain; it reads VSEWADLNKDILELIFNKLDVMDITMGASRVCISWFLASHNKTLWNTV.

This Arabidopsis thaliana (Mouse-ear cress) protein is Putative F-box protein At4g11580.